Here is a 514-residue protein sequence, read N- to C-terminus: Contact site A protein (514 aa).

The first 19 residues, 1-19, serve as a signal peptide directing secretion; the sequence is MKFLLVLIILYNILNSAHS. A globular region spans residues 20–453; that stretch reads APTITAVSNG…EATTSTTYTI (434 aa). The IPT/TIG 1 domain maps to 21–104; the sequence is PTITAVSNGK…TGGNGLFKYT (84 aa). 5 N-linked (GlcNAc...) asparagine glycosylation sites follow: Asn128, Asn137, Asn207, Asn294, and Asn399. The IPT/TIG 2 domain maps to 191-283; sequence PTITSITPLA…NQQPITFTYN (93 aa). 2 stretches are compositionally biased toward low complexity: residues 446–475 and 483–494; these read TTST…TATP and STPEETEAPSSA. Residues 446 to 494 are disordered; the sequence is TTSTTYTIPDTPTPTDTATPSPTPTETATPSPTPKPTSTPEETEAPSSA. 2 repeat units span residues 462–469 and 472–479. Residues 462–479 are 2 X 8 AA repeats, Pro-rich; the sequence is TATPSPTPTETATPSPTP. Residue Ser492 is the site of GPI-like-anchor amidated serine attachment. Positions 493–514 are cleaved as a propeptide — removed in mature form; it reads SATTLISPLSLIVIFISFVLLI.

Post-translationally, phosphorylated on serine and N-glycosylated with two types of oligosaccharide chains. The GPI-like-anchor contains a phosphoceramide group, rather than a phosphatidyl group.

Its subcellular location is the cell membrane. Its function is as follows. This cell-surface glycoprotein mediates cell-cell binding via homophilic interaction. The chain is Contact site A protein (csaA) from Dictyostelium discoideum (Social amoeba).